Reading from the N-terminus, the 467-residue chain is ATP synthase subunit beta (467 aa).

Glycine 150–threonine 157 is an ATP binding site.

Belongs to the ATPase alpha/beta chains family. F-type ATPases have 2 components, CF(1) - the catalytic core - and CF(0) - the membrane proton channel. CF(1) has five subunits: alpha(3), beta(3), gamma(1), delta(1), epsilon(1). CF(0) has three main subunits: a(1), b(2) and c(9-12). The alpha and beta chains form an alternating ring which encloses part of the gamma chain. CF(1) is attached to CF(0) by a central stalk formed by the gamma and epsilon chains, while a peripheral stalk is formed by the delta and b chains.

Its subcellular location is the cell inner membrane. The catalysed reaction is ATP + H2O + 4 H(+)(in) = ADP + phosphate + 5 H(+)(out). Functionally, produces ATP from ADP in the presence of a proton gradient across the membrane. The catalytic sites are hosted primarily by the beta subunits. This is ATP synthase subunit beta from Aliivibrio fischeri (strain MJ11) (Vibrio fischeri).